A 466-amino-acid chain; its full sequence is Glutamate--tRNA ligase (466 aa).

Positions 10-20 (PSPTGALHIGG) match the 'HIGH' region motif. Residues cysteine 99, cysteine 101, cysteine 126, and aspartate 128 each coordinate Zn(2+). The 'KMSKS' region signature appears at 239–243 (KLSKR). Lysine 242 provides a ligand contact to ATP.

The protein belongs to the class-I aminoacyl-tRNA synthetase family. Glutamate--tRNA ligase type 1 subfamily. As to quaternary structure, monomer. The cofactor is Zn(2+).

It localises to the cytoplasm. The enzyme catalyses tRNA(Glu) + L-glutamate + ATP = L-glutamyl-tRNA(Glu) + AMP + diphosphate. Its function is as follows. Catalyzes the attachment of glutamate to tRNA(Glu) in a two-step reaction: glutamate is first activated by ATP to form Glu-AMP and then transferred to the acceptor end of tRNA(Glu). The polypeptide is Glutamate--tRNA ligase (Pelagibacter ubique (strain HTCC1062)).